A 451-amino-acid polypeptide reads, in one-letter code: UBP1-associated protein 2B (451 aa).

Residues 1–86 (MTKKRKLESE…GNEDDDEEEP (86 aa)) form a disordered region. 2 stretches are compositionally biased toward basic and acidic residues: residues 25-38 (CEKE…VDNQ) and 49-63 (DTLK…KGED). Over residues 67 to 77 (AETSSGSGNQG) the composition is skewed to polar residues. 2 consecutive RRM domains span residues 128–236 (RKIF…NVSA) and 227–314 (RKIY…QHQH). Disordered stretches follow at residues 302-335 (ANDG…GYGA) and 423-451 (GGYQ…YMGR). The segment covering 431 to 451 (GQGGAGRGQHGAGYGGPYMGR) has biased composition (gly residues).

Expressed in shoot meristem and flowers.

The protein localises to the nucleus. Its function is as follows. Heterogeneous nuclear ribonucleoprotein (hnRNP)-like protein that acts as a component of a complex regulating the turnover of mRNAs in the nucleus. Binds with high affinity to RNA molecules that contain U-rich sequences in 3'-UTRs. May function in complex with UBP1 and contribute to the stabilization of mRNAs in the nucleus. The chain is UBP1-associated protein 2B (UBA2B) from Arabidopsis thaliana (Mouse-ear cress).